Consider the following 148-residue polypeptide: Single-stranded DNA-binding protein, mitochondrial (148 aa).

The transit peptide at 1–16 (MFRRPVLQVLRQFVRH) directs the protein to the mitochondrion. In terms of domain architecture, SSB spans 30–141 (LNRVHLLGRV…IIADNIIFLS (112 aa)). A phosphoserine mark is found at S67 and S79. Position 113 is an N6-acetyllysine (K113). K122 carries the N6-succinyllysine modification.

In terms of assembly, homotetramer. Interacts with MPG/AAG, through inhibition of its glycosylase activity it potentially prevents formation of DNA breaks in ssDNA, ensuring that base removal primarily occurs in dsDNA. Interacts with POLDIP2. Interacts with PRIMPOL.

Its subcellular location is the mitochondrion. The protein resides in the mitochondrion matrix. It is found in the mitochondrion nucleoid. In terms of biological role, binds preferentially and cooperatively to pyrimidine rich single-stranded DNA (ss-DNA). In vitro, required to maintain the copy number of mitochondrial DNA (mtDNA) and plays a crucial role during mtDNA replication by stimulating the activity of the replisome components POLG and TWNK at the replication fork. Promotes the activity of the gamma complex polymerase POLG, largely by organizing the template DNA and eliminating secondary structures to favor ss-DNA conformations that facilitate POLG activity. In addition it is able to promote the 5'-3' unwinding activity of the mtDNA helicase TWNK. May also function in mtDNA repair. The sequence is that of Single-stranded DNA-binding protein, mitochondrial (SSBP1) from Pongo abelii (Sumatran orangutan).